Reading from the N-terminus, the 365-residue chain is UDP-N-acetylglucosamine--N-acetylmuramyl-(pentapeptide) pyrophosphoryl-undecaprenol N-acetylglucosamine transferase (365 aa).

Residues 19-21 (TGG), Asn-131, Arg-170, Ser-201, Ile-255, 274-279 (ALTVTE), and Gln-300 contribute to the UDP-N-acetyl-alpha-D-glucosamine site.

Belongs to the glycosyltransferase 28 family. MurG subfamily.

The protein localises to the cell inner membrane. It catalyses the reaction di-trans,octa-cis-undecaprenyl diphospho-N-acetyl-alpha-D-muramoyl-L-alanyl-D-glutamyl-meso-2,6-diaminopimeloyl-D-alanyl-D-alanine + UDP-N-acetyl-alpha-D-glucosamine = di-trans,octa-cis-undecaprenyl diphospho-[N-acetyl-alpha-D-glucosaminyl-(1-&gt;4)]-N-acetyl-alpha-D-muramoyl-L-alanyl-D-glutamyl-meso-2,6-diaminopimeloyl-D-alanyl-D-alanine + UDP + H(+). It functions in the pathway cell wall biogenesis; peptidoglycan biosynthesis. Cell wall formation. Catalyzes the transfer of a GlcNAc subunit on undecaprenyl-pyrophosphoryl-MurNAc-pentapeptide (lipid intermediate I) to form undecaprenyl-pyrophosphoryl-MurNAc-(pentapeptide)GlcNAc (lipid intermediate II). In Acinetobacter baumannii (strain ATCC 17978 / DSM 105126 / CIP 53.77 / LMG 1025 / NCDC KC755 / 5377), this protein is UDP-N-acetylglucosamine--N-acetylmuramyl-(pentapeptide) pyrophosphoryl-undecaprenol N-acetylglucosamine transferase.